The sequence spans 239 residues: Sugar fermentation stimulation protein homolog (239 aa).

The protein belongs to the SfsA family.

The protein is Sugar fermentation stimulation protein homolog of Alcanivorax borkumensis (strain ATCC 700651 / DSM 11573 / NCIMB 13689 / SK2).